Here is a 468-residue protein sequence, read N- to C-terminus: ATP synthase subunit beta (468 aa).

Residue 155-162 coordinates ATP; that stretch reads GGAGVGKT.

Belongs to the ATPase alpha/beta chains family. In terms of assembly, F-type ATPases have 2 components, CF(1) - the catalytic core - and CF(0) - the membrane proton channel. CF(1) has five subunits: alpha(3), beta(3), gamma(1), delta(1), epsilon(1). CF(0) has three main subunits: a(1), b(2) and c(9-12). The alpha and beta chains form an alternating ring which encloses part of the gamma chain. CF(1) is attached to CF(0) by a central stalk formed by the gamma and epsilon chains, while a peripheral stalk is formed by the delta and b chains.

The protein resides in the cell membrane. It catalyses the reaction ATP + H2O + 4 H(+)(in) = ADP + phosphate + 5 H(+)(out). Functionally, produces ATP from ADP in the presence of a proton gradient across the membrane. The catalytic sites are hosted primarily by the beta subunits. This chain is ATP synthase subunit beta, found in Streptococcus agalactiae serotype Ia (strain ATCC 27591 / A909 / CDC SS700).